A 389-amino-acid chain; its full sequence is Succinate--CoA ligase [ADP-forming] subunit beta (389 aa).

Residues 9 to 236 enclose the ATP-grasp domain; sequence KELFAKHNVP…KDATDPLELK (228 aa). Residues K45, 52–54, S94, and E99 each bind ATP; that span reads GRG. Mg(2+) contacts are provided by N191 and D205. Substrate is bound by residues N256 and 318-320; that span reads GIT.

This sequence belongs to the succinate/malate CoA ligase beta subunit family. In terms of assembly, heterotetramer of two alpha and two beta subunits. Mg(2+) serves as cofactor.

It catalyses the reaction succinate + ATP + CoA = succinyl-CoA + ADP + phosphate. It carries out the reaction GTP + succinate + CoA = succinyl-CoA + GDP + phosphate. Its pathway is carbohydrate metabolism; tricarboxylic acid cycle; succinate from succinyl-CoA (ligase route): step 1/1. Its function is as follows. Succinyl-CoA synthetase functions in the citric acid cycle (TCA), coupling the hydrolysis of succinyl-CoA to the synthesis of either ATP or GTP and thus represents the only step of substrate-level phosphorylation in the TCA. The beta subunit provides nucleotide specificity of the enzyme and binds the substrate succinate, while the binding sites for coenzyme A and phosphate are found in the alpha subunit. In Mycobacteroides abscessus (strain ATCC 19977 / DSM 44196 / CCUG 20993 / CIP 104536 / JCM 13569 / NCTC 13031 / TMC 1543 / L948) (Mycobacterium abscessus), this protein is Succinate--CoA ligase [ADP-forming] subunit beta.